A 295-amino-acid polypeptide reads, in one-letter code: Thioredoxin-related transmembrane protein 2 (295 aa).

Residues 1-48 form the signal peptide; the sequence is MAVLAPLIALVYSVPRLSRWLARPYCLLSALLSIAFLLVRKLPPICNG. Residues 49-102 are Extracellular-facing; it reads LPTQREDGNPCDFDWREVEILMFLSAIVMMKNRRSITVEQHVGNIFMFSKVANA. The chain crosses the membrane as a helical span at residues 103–125; it reads ILFFRLDIRMGLLYLTLCIVFLM. Residues 114-269 form the Thioredoxin domain; it reads LLYLTLCIVF…LYQRAKKLSK (156 aa). Over 126-295 the chain is Cytoplasmic; that stretch reads TCKPPLYMGP…VPDGENKKDK (170 aa). Phosphoserine occurs at positions 211 and 243. The segment at 266–295 is disordered; that stretch reads KLSKGGDMSEEKPGNPTPTAVPDGENKKDK. The Di-lysine motif motif lies at 292 to 295; sequence KKDK.

Monomer. Homodimer; disulfide-linked. Occurs in both reduced and oxidized monomeric form. Oxidative conditions increase homodimerization. Interacts with CANX. Interacts with ATP2A2.

The protein resides in the endoplasmic reticulum membrane. It is found in the mitochondrion membrane. Endoplasmic reticulum and mitochondria-associated protein that probably functions as a regulator of cellular redox state and thereby regulates protein post-translational modification, protein folding and mitochondrial activity. Indirectly regulates neuronal proliferation, migration, and organization in the developing brain. The polypeptide is Thioredoxin-related transmembrane protein 2 (Tmx2) (Rattus norvegicus (Rat)).